The chain runs to 392 residues: Homeobox protein engrailed-1 (392 aa).

Disordered regions lie at residues 1-100, 132-164, 219-251, and 282-306; these read MEEQ…AQLH, ARGG…TRAP, KPSD…PAIL, and SDRP…DKRP. Low complexity predominate over residues 14–36; sequence SALGAAAAATPGGLSLSLSPGAS. 2 stretches are compositionally biased toward pro residues: residues 51 to 66 and 75 to 84; these read SPQP…PCLP and PPHPPPPPPQ. Low complexity predominate over residues 85–100; sequence HLAAPAHQPQPAAQLH. Over residues 223–236 the composition is skewed to gly residues; it reads TGGGGSGGGAGSPG. Positions 303 to 362 form a DNA-binding region, homeobox; it reads DKRPRTAFTAEQLQRLKAEFQANRYITEQRRQTLAQELSLNESQIKIWFQNKRAKIKKAT.

It belongs to the engrailed homeobox family.

It is found in the nucleus. Functionally, required for proper formation of the apical ectodermal ridge and correct dorsal-ventral patterning in the limb. The sequence is that of Homeobox protein engrailed-1 (EN1) from Homo sapiens (Human).